We begin with the raw amino-acid sequence, 156 residues long: ATP synthase subunit b (156 aa).

The helical transmembrane segment at 7–29 (LLGQAISFALFVWFCMKYVWPPL) threads the bilayer.

The protein belongs to the ATPase B chain family. In terms of assembly, F-type ATPases have 2 components, F(1) - the catalytic core - and F(0) - the membrane proton channel. F(1) has five subunits: alpha(3), beta(3), gamma(1), delta(1), epsilon(1). F(0) has three main subunits: a(1), b(2) and c(10-14). The alpha and beta chains form an alternating ring which encloses part of the gamma chain. F(1) is attached to F(0) by a central stalk formed by the gamma and epsilon chains, while a peripheral stalk is formed by the delta and b chains.

The protein resides in the cell inner membrane. F(1)F(0) ATP synthase produces ATP from ADP in the presence of a proton or sodium gradient. F-type ATPases consist of two structural domains, F(1) containing the extramembraneous catalytic core and F(0) containing the membrane proton channel, linked together by a central stalk and a peripheral stalk. During catalysis, ATP synthesis in the catalytic domain of F(1) is coupled via a rotary mechanism of the central stalk subunits to proton translocation. Functionally, component of the F(0) channel, it forms part of the peripheral stalk, linking F(1) to F(0). This Vibrio alginolyticus protein is ATP synthase subunit b.